Reading from the N-terminus, the 201-residue chain is Recombination protein RecR (201 aa).

The C4-type zinc-finger motif lies at 60-75 (CSRCGNVDTVDPCTVC). The region spanning 83–178 (SVIIVVEDVS…KITRLAHGVP (96 aa)) is the Toprim domain.

It belongs to the RecR family.

Functionally, may play a role in DNA repair. It seems to be involved in an RecBC-independent recombinational process of DNA repair. It may act with RecF and RecO. The protein is Recombination protein RecR of Rhizobium etli (strain ATCC 51251 / DSM 11541 / JCM 21823 / NBRC 15573 / CFN 42).